Consider the following 291-residue polypeptide: Diaminopimelate epimerase (291 aa).

3 residues coordinate substrate: asparagine 17, glutamine 50, and asparagine 70. The active-site Proton donor is the cysteine 79. Residues 80–81 (GN), asparagine 167, asparagine 200, and 218–219 (ER) contribute to the substrate site. Cysteine 227 acts as the Proton acceptor in catalysis. A substrate-binding site is contributed by 228–229 (GS).

Belongs to the diaminopimelate epimerase family. As to quaternary structure, homodimer.

It localises to the cytoplasm. It catalyses the reaction (2S,6S)-2,6-diaminopimelate = meso-2,6-diaminopimelate. It functions in the pathway amino-acid biosynthesis; L-lysine biosynthesis via DAP pathway; DL-2,6-diaminopimelate from LL-2,6-diaminopimelate: step 1/1. Its function is as follows. Catalyzes the stereoinversion of LL-2,6-diaminopimelate (L,L-DAP) to meso-diaminopimelate (meso-DAP), a precursor of L-lysine and an essential component of the bacterial peptidoglycan. The sequence is that of Diaminopimelate epimerase from Bradyrhizobium diazoefficiens (strain JCM 10833 / BCRC 13528 / IAM 13628 / NBRC 14792 / USDA 110).